Here is a 250-residue protein sequence, read N- to C-terminus: Ribosomal RNA small subunit methyltransferase J (250 aa).

S-adenosyl-L-methionine contacts are provided by residues 96 to 97 (RD) and Asp168.

This sequence belongs to the methyltransferase superfamily. RsmJ family.

The protein resides in the cytoplasm. It catalyses the reaction guanosine(1516) in 16S rRNA + S-adenosyl-L-methionine = N(2)-methylguanosine(1516) in 16S rRNA + S-adenosyl-L-homocysteine + H(+). Specifically methylates the guanosine in position 1516 of 16S rRNA. In Neisseria gonorrhoeae (strain NCCP11945), this protein is Ribosomal RNA small subunit methyltransferase J.